Consider the following 40-residue polypeptide: Snaclec tokaracetin subunit alpha (40 aa).

Residues 1 to 40 enclose the C-type lectin domain; it reads DCPSGWSSFKQYCYKPFKQLKTWEDAERFCLEQVKGAHLV. A disulfide bridge links Cys2 with Cys13.

The protein belongs to the snaclec family. In terms of assembly, heterodimer of subunits alpha and beta; disulfide-linked. In terms of tissue distribution, expressed by the venom gland.

It is found in the secreted. In terms of biological role, platelet antagonist that specifically and reversibly binds to a site on platelet glycoprotein Ibalpha (GP1BA) close to or identical with the site for vWF binding. It inhibits the binding of vWF to platelets and vWF-dependent shear-induced platelet aggregation. This is Snaclec tokaracetin subunit alpha from Protobothrops tokarensis (Tokara habu).